We begin with the raw amino-acid sequence, 433 residues long: uncharacterized protein (433 aa).

A signal peptide spans 1–28; that stretch reads MKICGLEKFRVFLSLISMVSLLCNGVNG. Residues 29 to 274 are Extracellular-facing; the sequence is FTIVRSMAVN…QAELEPKKTG (246 aa). The span at 235–250 shows a compositional bias: polar residues; it reads GENANPTANSGTSARS. A disordered region spans residues 235 to 266; that stretch reads GENANPTANSGTSARSNRNEQNKMEEPARNQA. The segment covering 251-266 has biased composition (basic and acidic residues); the sequence is NRNEQNKMEEPARNQA. Residues 275 to 295 form a helical membrane-spanning segment; that stretch reads VVVAGVTVSLAAGFVLALATL. Over 296 to 433 the chain is Cytoplasmic; the sequence is LLMKKKQTSL…HDKGTDEDKG (138 aa). 2 disordered regions span residues 320 to 340 and 413 to 433; these read EEPV…PSFD and KVIE…EDKG.

Component of the acid-insoluble and acid-soluble organic matrix of the aragonitic skeleton (at protein level).

Its subcellular location is the membrane. This is an uncharacterized protein from Acropora millepora (Staghorn coral).